The following is a 720-amino-acid chain: Cyclopenase penL (720 aa).

Cu cation contacts are provided by His137, His141, and His313.

Belongs to the tyrosinase family. It depends on Cu(2+) as a cofactor.

It carries out the reaction (-)-cyclopenine = viridicatin + methyl isocyanate + H(+). It catalyses the reaction (-)-4'-methoxycyclopenine = 4'-methoxyviridicatin + methyl isocyanate + H(+). Its pathway is secondary metabolite biosynthesis. It participates in alkaloid biosynthesis. The protein operates within mycotoxin biosynthesis. Functionally, cyclopenase; part of the gene cluster that mediates the biosynthesis of penigequinolones, potent insecticidal alkaloids that contain a highly modified 10-carbon prenyl group. The first stage is catalyzed by the nonribosomal peptide synthetase penN that condenses anthranilic acid and O-methyl-L-tyrosine to produce 4'-methoxycyclopeptin. 4'-methoxycyclopeptin is then converted to 4'-methoxydehydrocyclopeptin by the ketoglutarate-dependent dioxygenase penM through dehydrogenation to form a double bond between C-alpha and C-beta of the O-methyltyrosine side chain. PenM also converts its first product methoxydehydrocyclopeptin to 4'-methoxycyclopenin. The following conversion of 4'methoxycyclopenin into 4'-methoxyviridicatin is catalyzed by the cyclopenase penL. 4'-methoxyviridicatin is the precursor of quinolone natural products, and is further converted to quinolinone B. The prenyltransferase penI then catalyzes the canonical Friedel-Crafts alkylation of quinolinone B with dimethylallyl cation to yield dimethylallyl quinolone, which is subjected to FAD-dependent dehydrogenation by the FAD-linked oxidoreductase penH to yield conjugated aryl diene. The delta(3') double bond then serves as the site of the second alkylation with DMAPP catalyzed by the prenyltransferase penG to yield a carbenium ion intermediate, which can be attacked by H(2)O to yield a styrenyl quinolone containing a C3'-hydroxyprenyl chain, or undergo cyclization to yield yaequinolones J1 and J2. The conversion of the styrenyl quinolone into the tetrahydrofuran-containing yaequinolone C is performed by the FAD-dependent monooxygenase penE and involves epoxidation of the terminal C7'-C8' olefin, followed by epoxide ring opening initiated by the C3' hydroxyl group. The predicted cysteine hydrolase penJ acts as an epoxide hydrolase that enhances the rate of the 5-exo-tet cyclization step, increasing the yield of yaequinolone C. PenF catalyzes the cationic rearrangement of the epoxide formed by penE (before ring opening to produce yaequinolone C) into yaequinolone D. Finally, the short-chain dehydrogenase/reductase (SDR)-like reductase penD, catalyzes both the dehydration of yaequinolone D and the reduction of the resulting oxonium to yield penigequinolone. This Penicillium thymicola protein is Cyclopenase penL.